The following is a 489-amino-acid chain: Betaine aldehyde dehydrogenase (489 aa).

K(+) is bound by residues threonine 26 and aspartate 93. Position 150–152 (150–152) interacts with NAD(+); that stretch reads GAW. The active-site Charge relay system is the lysine 162. NAD(+) is bound at residue 176 to 179; the sequence is KPSE. Position 180 (valine 180) interacts with K(+). 229 to 232 is a binding site for NAD(+); the sequence is GVET. A K(+)-binding site is contributed by leucine 245. Glutamate 251 functions as the Proton acceptor in the catalytic mechanism. NAD(+) contacts are provided by glycine 253, cysteine 285, and glutamate 386. The active-site Nucleophile is cysteine 285. Cysteine 285 bears the Cysteine sulfenic acid (-SOH) mark. Residues lysine 456 and glycine 459 each contribute to the K(+) site. The Charge relay system role is filled by glutamate 463.

Belongs to the aldehyde dehydrogenase family. Dimer of dimers. It depends on K(+) as a cofactor.

It catalyses the reaction betaine aldehyde + NAD(+) + H2O = glycine betaine + NADH + 2 H(+). It participates in amine and polyamine biosynthesis; betaine biosynthesis via choline pathway; betaine from betaine aldehyde: step 1/1. In terms of biological role, involved in the biosynthesis of the osmoprotectant glycine betaine. Catalyzes the irreversible oxidation of betaine aldehyde to the corresponding acid. This is Betaine aldehyde dehydrogenase from Paraburkholderia phymatum (strain DSM 17167 / CIP 108236 / LMG 21445 / STM815) (Burkholderia phymatum).